The following is a 498-amino-acid chain: Probable malate:quinone oxidoreductase (498 aa).

Belongs to the MQO family. FAD is required as a cofactor.

The enzyme catalyses (S)-malate + a quinone = a quinol + oxaloacetate. It participates in carbohydrate metabolism; tricarboxylic acid cycle; oxaloacetate from (S)-malate (quinone route): step 1/1. The polypeptide is Probable malate:quinone oxidoreductase (Prochlorococcus marinus (strain AS9601)).